The sequence spans 1659 residues: eIF-2-alpha kinase GCN2 (1659 aa).

An RWD domain is found at 17–128 (NELEAIRSIY…SFTQEKLDEF (112 aa)). The disordered stretch occupies residues 149–170 (KEQLEKEEREKQQETIKKRSDE). Protein kinase domains lie at 256 to 527 (LVKP…MKFL) and 599 to 981 (FEEI…SGWL). ATP-binding positions include 605-613 (LGQGAFGQV) and Lys628. 2 disordered regions span residues 671 to 691 (NVFESTDEESDLSESSSDFEE) and 727 to 768 (FENS…VPRR). Position 761 is a phosphoserine (Ser761). The active-site Proton acceptor is Asp835. Residues Thr882 and Thr887 each carry the phosphothreonine; by autocatalysis modification. A histidyl-tRNA synthetase-like region spans residues 999 to 1519 (NPSSPWQQQV…EFKRWDENSS (521 aa)).

This sequence belongs to the protein kinase superfamily. Ser/Thr protein kinase family. GCN2 subfamily. As to quaternary structure, homodimer; homodimerization is important for kinase activation by uncharged tRNAs. Interacts (via N-terminal RWD domain) with GCN1 (via N- and C-terminus); this interaction stimulates GCN2 kinase activity in a GCN20-dependent manner in response to amino acid starvation. Interacts (via N-terminus) with the GCN1-GCN20 complex on translating ribosomes in amino acid-starved cells; GCN1 may bind near the ribosomal A-site and promotes the transfer of uncharged tRNAs from the A-site to the tRNA-binding domain in GCN2 for its subsequent kinase activation, and hence allowing GCN4 translational activation and derepression of amino acid biosynthetic genes. Interacts (via C-terminus) with TIF11; this interaction is direct, occurs in amino acid-repleted cells, may be stabilized in a ribosome-dependent manner, reduces GCN2-mediated eIF-2-alpha phosphorylation but not GCN2 autophosphorylation and is lost in amino acid-starved cells and by uncharged tRNAs. Associates (via C-terminus) with ribosomes. It depends on Mg(2+) as a cofactor. Post-translationally, autophosphorylated, autophosphorylation on Thr-882 and Thr-887 increases kinase activity.

It is found in the cytoplasm. The enzyme catalyses L-seryl-[protein] + ATP = O-phospho-L-seryl-[protein] + ADP + H(+). It carries out the reaction L-threonyl-[protein] + ATP = O-phospho-L-threonyl-[protein] + ADP + H(+). With respect to regulation, the integrated stress response (ISR) is activated in response to conditions that promote ribosome collisions: GCN1, which acts as a ribosome collision sensor, activates GCN2. The RQC pathway and the integrated stress response (ISR) antagonize each other: HEL2 prevents the activation of GCN2, while GCN2 suppresses RQC activation. Ribosome stalling-induced integrated stress response prefers ribosomes with empty A sites. The kinase activity is stimulated upon binding to uncharged tRNAs. Functionally, metabolic-stress sensing protein kinase that phosphorylates the alpha subunit of eukaryotic translation initiation factor 2 (eIF-2-alpha/SUI2) on 'Ser-52' in response to low amino acid, carbon, or purine availability. Required for adapatation to nutrient starvation by acting as a key component of the integrated stress response (ISR), by which cells alter their translational and transcriptional output in response to starvation. Converts phosphorylated eIF-2-alpha/SUI2 either to a competitive inhibitor of translation initiation factor eIF-2B, leading to a global protein synthesis repression, and thus to a reduced overall utilization of amino acids, or to a translational initiation activation of specific mRNAs, such as the transcriptional activator GCN4, and hence allowing GCN4-mediated reprogramming of transcription to alleviate nutrient depletion. Binds uncharged tRNAs. Binds to aminoacylated tRNA(Phe) less tightly than to deacylated tRNA(Phe). Binds to double-stranded RNA. The protein is eIF-2-alpha kinase GCN2 of Saccharomyces cerevisiae (strain ATCC 204508 / S288c) (Baker's yeast).